A 151-amino-acid polypeptide reads, in one-letter code: Large ribosomal subunit protein uL15 (151 aa).

The interval 1–60 (MAENNPLKIHNLRPAPGAKTAKTRVGRGEASKGKTAGRGTKGTKARYQVPERFEGGQMPL) is disordered.

It belongs to the universal ribosomal protein uL15 family. Part of the 50S ribosomal subunit.

Binds to the 23S rRNA. This is Large ribosomal subunit protein uL15 from Streptomyces coelicolor (strain ATCC BAA-471 / A3(2) / M145).